The following is a 376-amino-acid chain: NAD(P)H-quinone oxidoreductase subunit 1, chloroplastic (376 aa).

A run of 9 helical transmembrane segments spans residues 27–47 (LISI…GVLV), 65–85 (PEYA…KLLI), 97–117 (WLFS…YLVV), 130–150 (LGIF…LIAG), 166–186 (AAQS…ISLL), 251–271 (GIKF…SSLF), 272–292 (AVVL…IFFI), 310–330 (LIIP…FIFF), and 353–373 (FLLP…LTLF).

Belongs to the complex I subunit 1 family. As to quaternary structure, NDH is composed of at least 16 different subunits, 5 of which are encoded in the nucleus.

The protein resides in the plastid. Its subcellular location is the chloroplast thylakoid membrane. It carries out the reaction a plastoquinone + NADH + (n+1) H(+)(in) = a plastoquinol + NAD(+) + n H(+)(out). The catalysed reaction is a plastoquinone + NADPH + (n+1) H(+)(in) = a plastoquinol + NADP(+) + n H(+)(out). In terms of biological role, NDH shuttles electrons from NAD(P)H:plastoquinone, via FMN and iron-sulfur (Fe-S) centers, to quinones in the photosynthetic chain and possibly in a chloroplast respiratory chain. The immediate electron acceptor for the enzyme in this species is believed to be plastoquinone. Couples the redox reaction to proton translocation, and thus conserves the redox energy in a proton gradient. This chain is NAD(P)H-quinone oxidoreductase subunit 1, chloroplastic, found in Chara vulgaris (Common stonewort).